Consider the following 108-residue polypeptide: MIKTTLLFFATALCEIIGCFLPWLWLKRGASVFLLLPAGIALALFVWLLTLHPAASGRVYAAYGGVYVCTALLWLRVVDGVKLSAYDWAGALVALCGMLIIVAGWGRT.

4 helical membrane passes run 6–26 (LLFF…WLWL), 29–49 (GASV…VWLL), 61–81 (AAYG…VDGV), and 85–105 (AYDW…VAGW).

This sequence belongs to the UPF0060 family.

Its subcellular location is the cell inner membrane. This Enterobacter sp. (strain 638) protein is UPF0060 membrane protein Ent638_1931.